The chain runs to 391 residues: Lipid-A-disaccharide synthase (391 aa).

Belongs to the LpxB family.

The catalysed reaction is a lipid X + a UDP-2-N,3-O-bis[(3R)-3-hydroxyacyl]-alpha-D-glucosamine = a lipid A disaccharide + UDP + H(+). Its pathway is bacterial outer membrane biogenesis; LPS lipid A biosynthesis. Functionally, condensation of UDP-2,3-diacylglucosamine and 2,3-diacylglucosamine-1-phosphate to form lipid A disaccharide, a precursor of lipid A, a phosphorylated glycolipid that anchors the lipopolysaccharide to the outer membrane of the cell. The sequence is that of Lipid-A-disaccharide synthase from Azoarcus sp. (strain BH72).